The sequence spans 347 residues: Transcription elongation factor A protein 3 (347 aa).

The TFIIS N-terminal domain maps to 5–82 (EELLRIAKKL…KNWKRLLDSP (78 aa)). Residues 83–100 (RTTKGEREEREKAKKEKG) show a composition bias toward basic and acidic residues. The interval 83–168 (RTTKGEREER…TTPSSPSTPT (86 aa)) is disordered. Residue S113 is modified to Phosphoserine. Over residues 119–131 (GGGEPKTRRDSVD) the composition is skewed to basic and acidic residues. 2 stretches are compositionally biased toward low complexity: residues 132-142 (SRSSTTSSPKR) and 157-168 (TPTTPSSPSTPT). S139 carries the post-translational modification Phosphoserine. Residues 186-302 (VRDKCVEMLS…EHQMAKTGGT (117 aa)) form the TFIIS central domain. The TFIIS-type zinc-finger motif lies at 305 to 345 (DLLRCSKCKKKNCTYNQVQTRSADEPMTTFVLCNECGNRWK). Residues C309, C312, C337, and C340 each coordinate Zn(2+).

This sequence belongs to the TFS-II family. Liver, kidney and heart.

Its subcellular location is the nucleus. Functionally, necessary for efficient RNA polymerase II transcription elongation past template-encoded arresting sites. The arresting sites in DNA have the property of trapping a certain fraction of elongating RNA polymerases that pass through, resulting in locked ternary complexes. Cleavage of the nascent transcript by S-II allows the resumption of elongation from the new 3'-terminus. This is Transcription elongation factor A protein 3 (Tcea3) from Mus musculus (Mouse).